We begin with the raw amino-acid sequence, 164 residues long: ATP synthase subunit b (164 aa).

Residues 6 to 26 (GELVGNFILVTGSVIVLLLLI) form a helical membrane-spanning segment.

This sequence belongs to the ATPase B chain family. F-type ATPases have 2 components, F(1) - the catalytic core - and F(0) - the membrane proton channel. F(1) has five subunits: alpha(3), beta(3), gamma(1), delta(1), epsilon(1). F(0) has three main subunits: a(1), b(2) and c(10-14). The alpha and beta chains form an alternating ring which encloses part of the gamma chain. F(1) is attached to F(0) by a central stalk formed by the gamma and epsilon chains, while a peripheral stalk is formed by the delta and b chains.

Its subcellular location is the cell membrane. In terms of biological role, f(1)F(0) ATP synthase produces ATP from ADP in the presence of a proton or sodium gradient. F-type ATPases consist of two structural domains, F(1) containing the extramembraneous catalytic core and F(0) containing the membrane proton channel, linked together by a central stalk and a peripheral stalk. During catalysis, ATP synthesis in the catalytic domain of F(1) is coupled via a rotary mechanism of the central stalk subunits to proton translocation. Functionally, component of the F(0) channel, it forms part of the peripheral stalk, linking F(1) to F(0). The protein is ATP synthase subunit b of Streptococcus pyogenes serotype M12 (strain MGAS2096).